A 96-amino-acid chain; its full sequence is Large ribosomal subunit protein uL23 (96 aa).

Belongs to the universal ribosomal protein uL23 family. As to quaternary structure, part of the 50S ribosomal subunit. Contacts protein L29, and trigger factor when it is bound to the ribosome.

Its function is as follows. One of the early assembly proteins it binds 23S rRNA. One of the proteins that surrounds the polypeptide exit tunnel on the outside of the ribosome. Forms the main docking site for trigger factor binding to the ribosome. The protein is Large ribosomal subunit protein uL23 of Maridesulfovibrio salexigens (strain ATCC 14822 / DSM 2638 / NCIMB 8403 / VKM B-1763) (Desulfovibrio salexigens).